Here is a 100-residue protein sequence, read N- to C-terminus: UPF0213 protein YhbQ (100 aa).

The region spanning 2–77 is the GIY-YIG domain; sequence TPWFLYLIRT…KQLTKRQKER (76 aa).

This sequence belongs to the UPF0213 family.

The polypeptide is UPF0213 protein YhbQ (Escherichia coli O17:K52:H18 (strain UMN026 / ExPEC)).